The following is a 1131-amino-acid chain: Kinesin-like protein CG14535 (1131 aa).

Over residues 1–11 the composition is skewed to polar residues; sequence MATTSTSNMSR. A disordered region spans residues 1–25; that stretch reads MATTSTSNMSRNGGFCGALQRAPPP. Residues 44–396 form the Kinesin motor domain; that stretch reads KVKVMLRVAD…IQIASRIHRL (353 aa). Disordered stretches follow at residues 472-494, 693-753, 905-926, and 1016-1072; these read ALKGSGLEKPPSKSASNSPMMMK, DLPD…SRDI, PAYRLTPSPPKQPSHSPSQGSL, and TSSE…QRHR. The span at 483-494 shows a compositional bias: low complexity; it reads SKSASNSPMMMK. Residues 1016 to 1032 show a composition bias toward polar residues; that stretch reads TSSEAYDSGHDSNSTPR.

It belongs to the TRAFAC class myosin-kinesin ATPase superfamily. Kinesin family. KIF26 subfamily.

It localises to the cytoplasm. The protein localises to the cytoskeleton. The polypeptide is Kinesin-like protein CG14535 (Drosophila melanogaster (Fruit fly)).